The sequence spans 2072 residues: Protein still life, isoform SIF type 1 (2072 aa).

Gly-2 carries the N-myristoyl glycine lipid modification. Residues 29 to 147 form the WH1 domain; it reads RRDGHLLSSF…ECCSPSFKFS (119 aa). 7 disordered regions span residues 153–188, 245–284, 327–355, 459–486, 502–576, 618–655, and 699–747; these read SYSL…EPQC, DNVA…NTNT, EGTQ…RNKD, NNTM…RGYP, EGSP…SPTS, AKSS…ELIR, and SGSS…YKSA. Positions 275 to 284 are enriched in polar residues; it reads VANSGVNTNT. Composition is skewed to low complexity over residues 338–351, 459–476, and 522–553; these read SVGT…GTGT, NNTM…SGSR, and SSSN…PPQR. Over residues 564-576 the composition is skewed to polar residues; the sequence is APNVTPTPGSPTS. Over residues 634-655 the composition is skewed to basic and acidic residues; that stretch reads IRDKERDRDRDGYYSDRNELIR. Over residues 732–743 the composition is skewed to polar residues; that stretch reads SLRQDSSLNDSG. The 119-residue stretch at 840–958 folds into the PH domain; that stretch reads TGAVRKAGFL…SIHSACAAAF (119 aa). Positions 1088–1119 are disordered; the sequence is GRGATKRRPPMLSRSNSGSSRRSMQMNSRDEP. Low complexity predominate over residues 1100–1114; that stretch reads SRSNSGSSRRSMQMN. The region spanning 1121–1188 is the RBD domain; that stretch reads KTFKVAMPDN…PHRNDLIENY (68 aa). A PDZ domain is found at 1204–1293; sequence QVELQRTTLE…LSMMMRSSRT (90 aa). Positions 1403–1424 are disordered; it reads AEQETRKSSPTGSVTSSVSTTA. Low complexity predominate over residues 1410 to 1424; sequence SSPTGSVTSSVSTTA. Positions 1436-1630 constitute a DH domain; the sequence is KLRKVVMELV…EKVAEHINEM (195 aa). 3 disordered regions span residues 1803-1832, 1844-2039, and 2051-2072; these read MKNF…NSQT, HGSH…YQPV, and PRDM…DVKN. 2 stretches are compositionally biased toward low complexity: residues 1811 to 1821 and 1926 to 1943; these read GSVSGHSSQGM and QQQQ…QQGH. The segment covering 1970-1984 has biased composition (basic and acidic residues); sequence HSSDIERIDPGTKSE. The segment covering 2007-2022 has biased composition (low complexity); sequence LTLSTTSTLSVGSTGS. Positions 2023 to 2032 are enriched in polar residues; the sequence is QARLIQSSHP.

In terms of tissue distribution, expressed in both larval and adult brains, mainly in a subset of neurons but not in glia. In the adult eye is expressed in the two primary pigment cells in the subapical region of the eye. Also present in photoreceptors.

It localises to the synapse. In terms of biological role, regulates synaptic differentiation through the organization of actin cytoskeleton possibly by activating Rho-like GTPases. Is likely a factor in the cascade of Rac1 or Cdc42 in the neurons. May play a role in maintaining proper septate junction functions. Required for eye development and most likely affects corneal lens-formation. The sequence is that of Protein still life, isoform SIF type 1 (sif) from Drosophila melanogaster (Fruit fly).